The following is a 262-amino-acid chain: TLC domain-containing protein 4-B (262 aa).

A run of 6 helical transmembrane segments spans residues 6–26 (PLTV…FHVG), 53–73 (TVSS…LVYD), 90–110 (LNVA…IYYW), 122–142 (HLAA…PYFG), 177–197 (GVLM…IYYG), and 218–238 (AWII…IKIA). The region spanning 44–246 (RQKIEWNSRT…IAKGCYKVLY (203 aa)) is the TLC domain.

The protein belongs to the TLCD4 family.

It is found in the membrane. The polypeptide is TLC domain-containing protein 4-B (tlcd4-b) (Xenopus laevis (African clawed frog)).